The sequence spans 95 residues: Hge-scorpine (95 aa).

A signal peptide spans 1 to 19 (MNTKLTVLCFLGIVTIVSC). The BetaSPN-type CS-alpha/beta domain maps to 55–94 (QFGCFANVDVKGDCKRHCKAEDKEGICHGTKCKCGVPISY). 3 disulfides stabilise this stretch: C58–C81, C68–C86, and C72–C88.

The protein belongs to the long chain scorpion toxin family. Class 3 subfamily. Expressed by the venom gland.

It is found in the secreted. Functionally, has antibacterial activity against B.subtilis, but not against S.aureus. Also has hemolytic and cytolytic activities. Since cell lysis occurs at the tested concentrations, observation of activity on potassium channels is impossible. Its function is as follows. Blocks Kv1.1/KCNA1 (IC(50)=185 nM) potassium channels. Shows a weak hemolytic activity. In Hoffmannihadrurus gertschi (Scorpion), this protein is Hge-scorpine.